The sequence spans 82 residues: Progonadoliberin-3 (82 aa).

The first 23 residues, 1–23 (MDLSNRTVVQVVVLALVAQVTLS), serve as a signal peptide directing secretion. Pyrrolidone carboxylic acid is present on glutamine 24. Position 33 is a glycine amide (glycine 33).

It belongs to the GnRH family.

The protein resides in the secreted. Its function is as follows. Stimulates the secretion of gonadotropins. The sequence is that of Progonadoliberin-3 (gnrh3) from Salmo trutta (Brown trout).